The chain runs to 1804 residues: Obscurin-like protein 1 (1804 aa).

Ser10 carries the post-translational modification Phosphoserine. 4 Ig-like domains span residues 12-100 (PCFL…AAVT), 128-225 (PKFL…ALLQ), 241-330 (PKPV…QTLS), and 339-425 (PRLR…ANVT). The tract at residues 17-19 (FPR) is interaction with TTN. Cys33 and Cys84 are joined by a disulfide. An interaction with TTN region spans residues 85–94 (RARNAAGEAY). A disulfide bridge connects residues Cys149 and Cys209. Residues 227–249 (HQPRESPPQDPDENPKPVLEPLK) form a disordered region. Disulfide bonds link Cys267–Cys319 and Cys362–Cys412. One can recognise a Fibronectin type-III domain in the interval 517 to 615 (PPGPPVMVEM…FNGSAHLVPT (99 aa)). Ig-like domains lie at 720–800 (PQDK…FGVT), 804–891 (PPVH…FTVT), 902–982 (PSSE…FTIT), 986–1075 (PPVR…VTVT), 1078–1165 (PERI…FNVS), 1176–1261 (PEAA…FNVQ), 1266–1442 (PPVK…ARLS), 1536–1621 (PVTI…ARLT), 1625–1694 (REVS…EDTG), and 1702–1798 (PAQS…ADTQ). 8 cysteine pairs are disulfide-bonded: Cys738/Cys788, Cys829/Cys879, Cys920/Cys970, Cys1011/Cys1061, Cys1103/Cys1153, Cys1195/Cys1245, Cys1289/Cys1430, and Cys1558/Cys1608.

As to quaternary structure, component of the 3M complex, composed of core components CUL7, CCDC8 and OBSL1. Interacts with CCDC8. Interacts with CUL7; the interaction is direct. Interacts with FBXW8. Interacts (via N-terminal Ig-like domain) with TTN/titin (via C-terminal Ig-like domain); the interaction is direct.

The protein resides in the cytoplasm. It is found in the perinuclear region. It localises to the golgi apparatus. Its function is as follows. Core component of the 3M complex, a complex required to regulate microtubule dynamics and genome integrity. It is unclear how the 3M complex regulates microtubules, it could act by controlling the level of a microtubule stabilizer. Acts as a regulator of the Cul7-RING(FBXW8) ubiquitin-protein ligase, playing a critical role in the ubiquitin ligase pathway that regulates Golgi morphogenesis and dendrite patterning in brain. Required to localize CUL7 to the Golgi apparatus in neurons. The chain is Obscurin-like protein 1 (Obsl1) from Mus musculus (Mouse).